Here is a 469-residue protein sequence, read N- to C-terminus: Uronate isomerase (469 aa).

The protein belongs to the metallo-dependent hydrolases superfamily. Uronate isomerase family.

It catalyses the reaction D-glucuronate = D-fructuronate. It carries out the reaction aldehydo-D-galacturonate = keto-D-tagaturonate. Its pathway is carbohydrate metabolism; pentose and glucuronate interconversion. In Edwardsiella ictaluri (strain 93-146), this protein is Uronate isomerase.